Here is a 275-residue protein sequence, read N- to C-terminus: MQRSVLHTASQLAHGMCLLFPRTGAFRGLKGPSVSSNVGCKVILALDPPKRCLHAGAALFASKSSAVSSQPADTPRKVPEEREPLTSATEVPKQSPVESDASDPDPLQDKSISLVQRFKKTFKQYGKVMIPVHLVTSTVWFGSFYYAAMKGVNVVPFLELIGLPDSIVDILKNSQSGNALTAYALYKIATPARYTVTLGGTSITVKYLRKNGYMSTPPPVKEYLQDRMEETKDKITEKMEETKDKITEKMEETKDKITEKIQETKDKVSFKKIKD.

The segment at 68 to 108 (SSQPADTPRKVPEEREPLTSATEVPKQSPVESDASDPDPLQ) is disordered. Over residues 74 to 84 (TPRKVPEEREP) the composition is skewed to basic and acidic residues. A DUF1279 domain is found at 109–221 (DKSISLVQRF…GYMSTPPPVK (113 aa)). A helical membrane pass occupies residues 128–148 (VMIPVHLVTSTVWFGSFYYAA). The stretch at 221–271 (KEYLQDRMEETKDKITEKMEETKDKITEKMEETKDKITEKIQETKDKVSFK) forms a coiled coil.

Belongs to the FAM210 family. Interacts with ATAD3A.

The protein localises to the membrane. It localises to the mitochondrion. It is found in the cytoplasm. Functionally, may play a role in the structure and strength of both muscle and bone. The polypeptide is Protein FAM210A (FAM210A) (Gallus gallus (Chicken)).